A 503-amino-acid chain; its full sequence is Cobyric acid synthase (503 aa).

The GATase cobBQ-type domain occupies 251-450 (DLDIAVIRLP…IHGIFENAAF (200 aa)). The active-site Nucleophile is Cys331. His442 is a catalytic residue.

The protein belongs to the CobB/CobQ family. CobQ subfamily.

The protein operates within cofactor biosynthesis; adenosylcobalamin biosynthesis. In terms of biological role, catalyzes amidations at positions B, D, E, and G on adenosylcobyrinic A,C-diamide. NH(2) groups are provided by glutamine, and one molecule of ATP is hydrogenolyzed for each amidation. This Dehalococcoides mccartyi (strain CBDB1) protein is Cobyric acid synthase.